The sequence spans 218 residues: Alkylmercury lyase (218 aa).

Belongs to the MerB family.

It carries out the reaction an alkylmercury + H(+) = an alkane + Hg(2+). Functionally, cleaves the carbon-mercury bond of organomercurials such as phenylmercuric acetate. One product is Hg(2+), which is subsequently detoxified by the mercuric reductase. This chain is Alkylmercury lyase (merB1), found in Bacillus cereus.